The chain runs to 334 residues: Ornithine carbamoyltransferase (334 aa).

Residues 56 to 59, Gln-83, Arg-107, and 134 to 137 contribute to the carbamoyl phosphate site; these read STRT and HPTQ. L-ornithine is bound by residues Asn-168, Asp-232, and 236 to 237; that span reads SM. Residues 274-275 and Arg-320 contribute to the carbamoyl phosphate site; that span reads CL.

It belongs to the aspartate/ornithine carbamoyltransferase superfamily. OTCase family.

It is found in the cytoplasm. It catalyses the reaction carbamoyl phosphate + L-ornithine = L-citrulline + phosphate + H(+). It participates in amino-acid biosynthesis; L-arginine biosynthesis; L-arginine from L-ornithine and carbamoyl phosphate: step 1/3. Reversibly catalyzes the transfer of the carbamoyl group from carbamoyl phosphate (CP) to the N(epsilon) atom of ornithine (ORN) to produce L-citrulline. This chain is Ornithine carbamoyltransferase, found in Shigella boydii serotype 4 (strain Sb227).